Here is a 341-residue protein sequence, read N- to C-terminus: tRNA N6-adenosine threonylcarbamoyltransferase (341 aa).

Fe cation-binding residues include histidine 114 and histidine 118. Substrate is bound by residues 136-140 (LVSGG), aspartate 170, glycine 183, aspartate 187, and asparagine 275. Aspartate 303 contributes to the Fe cation binding site.

The protein belongs to the KAE1 / TsaD family. Requires Fe(2+) as cofactor.

The protein resides in the cytoplasm. It catalyses the reaction L-threonylcarbamoyladenylate + adenosine(37) in tRNA = N(6)-L-threonylcarbamoyladenosine(37) in tRNA + AMP + H(+). Functionally, required for the formation of a threonylcarbamoyl group on adenosine at position 37 (t(6)A37) in tRNAs that read codons beginning with adenine. Is involved in the transfer of the threonylcarbamoyl moiety of threonylcarbamoyl-AMP (TC-AMP) to the N6 group of A37, together with TsaE and TsaB. TsaD likely plays a direct catalytic role in this reaction. This Mycobacterium avium (strain 104) protein is tRNA N6-adenosine threonylcarbamoyltransferase.